The chain runs to 201 residues: Probable GTP-binding protein EngB (201 aa).

The EngB-type G domain maps to 22–197 (RLPEYAFIGR…LDYIDSINQE (176 aa)). Residues 30 to 37 (GRSNVGKS), 57 to 61 (GKTQL), 75 to 78 (DLPG), 142 to 145 (TKAD), and 173 to 178 (VFITSS) contribute to the GTP site. 2 residues coordinate Mg(2+): S37 and T59.

It belongs to the TRAFAC class TrmE-Era-EngA-EngB-Septin-like GTPase superfamily. EngB GTPase family. It depends on Mg(2+) as a cofactor.

Its function is as follows. Necessary for normal cell division and for the maintenance of normal septation. In Porphyromonas gingivalis (strain ATCC 33277 / DSM 20709 / CIP 103683 / JCM 12257 / NCTC 11834 / 2561), this protein is Probable GTP-binding protein EngB.